The following is a 79-amino-acid chain: Anti-insect Ac4 (79 aa).

Residues 1-17 (MISLSLLLMIGVESVRD) form the signal peptide. The region spanning 18-77 (GYIVDFKNCVYRCVPPCDGLCKKNGGKGGSCSFLIGSGLACWCNALPDNVPIKDPLHKCP) is the LCN-type CS-alpha/beta domain. Disulfide bonds link Cys-26/Cys-76, Cys-30/Cys-48, Cys-34/Cys-58, and Cys-38/Cys-60.

Belongs to the long (4 C-C) scorpion toxin superfamily. Sodium channel inhibitor family. Alpha subfamily. In terms of tissue distribution, expressed by the venom gland.

It is found in the secreted. Alpha toxins bind voltage-independently at site-3 of sodium channels (Nav) and inhibit the inactivation of the activated channels, thereby blocking neuronal transmission. This protein is weakly toxic against insects (ED(50)&gt;2 ug per 100 mg of blowfly larvae), but is inactive against mammalian sodium channels (rNav1.2a, and rNav1.4). The polypeptide is Anti-insect Ac4 (Androctonus crassicauda (Arabian fat-tailed scorpion)).